The chain runs to 168 residues: tRNA-splicing endonuclease (168 aa).

Residues tyrosine 107, histidine 114, and lysine 145 contribute to the active site.

It belongs to the tRNA-intron endonuclease family. Archaeal short subfamily. Homotetramer; although the tetramer contains four active sites, only two participate in the cleavage. Therefore, it should be considered as a dimer of dimers.

It carries out the reaction pretRNA = a 3'-half-tRNA molecule with a 5'-OH end + a 5'-half-tRNA molecule with a 2',3'-cyclic phosphate end + an intron with a 2',3'-cyclic phosphate and a 5'-hydroxyl terminus.. In terms of biological role, endonuclease that removes tRNA introns. Cleaves pre-tRNA at the 5'- and 3'-splice sites to release the intron. The products are an intron and two tRNA half-molecules bearing 2',3' cyclic phosphate and 5'-OH termini. Recognizes a pseudosymmetric substrate in which 2 bulged loops of 3 bases are separated by a stem of 4 bp. This is tRNA-splicing endonuclease from Thermococcus gammatolerans (strain DSM 15229 / JCM 11827 / EJ3).